The following is a 151-amino-acid chain: UPF0178 protein PMI1258 (151 aa).

This sequence belongs to the UPF0178 family.

This chain is UPF0178 protein PMI1258, found in Proteus mirabilis (strain HI4320).